The primary structure comprises 342 residues: Ribosomal RNA small subunit methyltransferase H (342 aa).

Residues 42-44 (GGH), aspartate 61, phenylalanine 88, aspartate 119, and glutamine 126 each bind S-adenosyl-L-methionine.

This sequence belongs to the methyltransferase superfamily. RsmH family.

The protein localises to the cytoplasm. It catalyses the reaction cytidine(1402) in 16S rRNA + S-adenosyl-L-methionine = N(4)-methylcytidine(1402) in 16S rRNA + S-adenosyl-L-homocysteine + H(+). In terms of biological role, specifically methylates the N4 position of cytidine in position 1402 (C1402) of 16S rRNA. This is Ribosomal RNA small subunit methyltransferase H from Corynebacterium jeikeium (strain K411).